The chain runs to 406 residues: Protein translocase subunit SecD (406 aa).

A run of 6 helical transmembrane segments spans residues 8–28, 240–260, 262–282, 289–309, 334–354, and 361–381; these read IVIL…NPIN, MAAM…YRVA, FVAD…MCAI, PGIA…VIIF, FPAI…LFFF, and GFAV…IFIT.

Belongs to the SecD/SecF family. SecD subfamily. Forms a complex with SecF. Part of the essential Sec protein translocation apparatus which comprises SecA, SecYEG and auxiliary proteins SecDF. Other proteins may also be involved.

It localises to the cell inner membrane. Its function is as follows. Part of the Sec protein translocase complex. Interacts with the SecYEG preprotein conducting channel. SecDF uses the proton motive force (PMF) to complete protein translocation after the ATP-dependent function of SecA. The protein is Protein translocase subunit SecD of Sebaldella termitidis (strain ATCC 33386 / NCTC 11300).